Reading from the N-terminus, the 142-residue chain is Hemoglobin subunit zeta (142 aa).

Serine 2 is subject to N-acetylserine. The 141-residue stretch at 2-142 (SLTKTEGTII…VSSVLTEKYR (141 aa)) folds into the Globin domain. A Phosphothreonine modification is found at threonine 29. Serine 53 is modified (phosphoserine). A heme b-binding site is contributed by histidine 59. Phosphoserine occurs at positions 73 and 82. Histidine 88 serves as a coordination point for heme b.

Belongs to the globin family. Heterotetramer of two zeta chains and beta-type chains.

Its function is as follows. The zeta chain is an alpha-type chain of mammalian embryonic hemoglobin. This Pan troglodytes (Chimpanzee) protein is Hemoglobin subunit zeta (HBZ1).